We begin with the raw amino-acid sequence, 166 residues long: Lipoprotein signal peptidase (166 aa).

3 helical membrane passes run 12-32, 70-90, and 102-122; these read WLWL…LILQ, WFFA…MYRA, and ALII…GFVV. Active-site residues include D123 and D141. A helical membrane pass occupies residues 142-162; it reads SAICFGAAMIVLEGFLPNAAA.

Belongs to the peptidase A8 family.

It localises to the cell inner membrane. The catalysed reaction is Release of signal peptides from bacterial membrane prolipoproteins. Hydrolyzes -Xaa-Yaa-Zaa-|-(S,diacylglyceryl)Cys-, in which Xaa is hydrophobic (preferably Leu), and Yaa (Ala or Ser) and Zaa (Gly or Ala) have small, neutral side chains.. The protein operates within protein modification; lipoprotein biosynthesis (signal peptide cleavage). In terms of biological role, this protein specifically catalyzes the removal of signal peptides from prolipoproteins. In Enterobacter sp. (strain 638), this protein is Lipoprotein signal peptidase.